Reading from the N-terminus, the 373-residue chain is Protein CAF40 (373 aa).

A disordered region spans residues 1-91 (MFSAQKPIYG…ANATRNNPNM (91 aa)). The span at 11 to 22 (NGAGVNMGGGGP) shows a compositional bias: gly residues. The span at 50-88 (GGPMLMGNTPNNNNSNENGENNGNNGNNGGNDANATRNN) shows a compositional bias: low complexity.

The protein belongs to the CNOT9 family. In terms of assembly, subunit of the 1.0 MDa CCR4-NOT core complex that contains CCR4, CAF1, NOT1, NOT2, NOT3, NOT4, NOT5, CAF40 and CAF130. In the complex interacts with NOT1. The core complex probably is part of a less characterized 1.9 MDa CCR4-NOT complex.

It localises to the cytoplasm. It is found in the nucleus. In terms of biological role, acts as a component of the CCR4-NOT core complex, which in the nucleus seems to be a general transcription factor, and in the cytoplasm the major mRNA deadenylase involved in mRNA turnover. This is Protein CAF40 (CAF40) from Saccharomyces cerevisiae (strain ATCC 204508 / S288c) (Baker's yeast).